Reading from the N-terminus, the 166-residue chain is RNA pyrophosphohydrolase (166 aa).

The Nudix hydrolase domain maps to 8 to 158; sequence PYRSCVGMML…KRPVYERVVK (151 aa). A Nudix box motif is present at residues 47 to 68; sequence GGIDPGEDYWEAAQRELLEETN.

The protein belongs to the Nudix hydrolase family. RppH subfamily. Requires a divalent metal cation as cofactor.

Its function is as follows. Accelerates the degradation of transcripts by removing pyrophosphate from the 5'-end of triphosphorylated RNA, leading to a more labile monophosphorylated state that can stimulate subsequent ribonuclease cleavage. This chain is RNA pyrophosphohydrolase, found in Afipia carboxidovorans (strain ATCC 49405 / DSM 1227 / KCTC 32145 / OM5) (Oligotropha carboxidovorans).